The following is a 540-amino-acid chain: uncharacterized protein (540 aa).

Residues 1–20 (MSVSYRGPRWSSFVHVSQHS) form the signal peptide.

It belongs to the TP096X family.

This is an uncharacterized protein from Treponema pallidum (strain Nichols).